Here is a 324-residue protein sequence, read N- to C-terminus: tRNA N6-adenosine threonylcarbamoyltransferase (324 aa).

Residues His107, His111, and Tyr127 each coordinate Fe cation. Substrate-binding positions include 127 to 131 (YVSGG), Asp159, Gly172, Glu176, and Asn257. A Fe cation-binding site is contributed by Asp285.

The protein belongs to the KAE1 / TsaD family. Monomer. Component of the KEOPS complex that consists of Kae1, Bud32, Cgi121 and Pcc1; the whole complex dimerizes. Fe(2+) serves as cofactor.

The protein resides in the cytoplasm. It catalyses the reaction L-threonylcarbamoyladenylate + adenosine(37) in tRNA = N(6)-L-threonylcarbamoyladenosine(37) in tRNA + AMP + H(+). Functionally, required for the formation of a threonylcarbamoyl group on adenosine at position 37 (t(6)A37) in tRNAs that read codons beginning with adenine. Is a component of the KEOPS complex that is probably involved in the transfer of the threonylcarbamoyl moiety of threonylcarbamoyl-AMP (TC-AMP) to the N6 group of A37. Kae1 likely plays a direct catalytic role in this reaction, but requires other protein(s) of the complex to fulfill this activity. In vitro, binds tRNA, ssRNA, both single- and double-stranded DNA, and exhibits a low ATPase activity. The chain is tRNA N6-adenosine threonylcarbamoyltransferase from Pyrococcus abyssi (strain GE5 / Orsay).